Consider the following 269-residue polypeptide: tRNA pseudouridine synthase A (269 aa).

Asp-55 serves as the catalytic Nucleophile. Tyr-111 is a binding site for substrate.

The protein belongs to the tRNA pseudouridine synthase TruA family.

It carries out the reaction uridine(38/39/40) in tRNA = pseudouridine(38/39/40) in tRNA. In terms of biological role, formation of pseudouridine at positions 38, 39 and 40 in the anticodon stem and loop of transfer RNAs. This Methanosarcina mazei (strain ATCC BAA-159 / DSM 3647 / Goe1 / Go1 / JCM 11833 / OCM 88) (Methanosarcina frisia) protein is tRNA pseudouridine synthase A.